A 660-amino-acid polypeptide reads, in one-letter code: Bifunctional polymyxin resistance protein ArnA (660 aa).

Positions 1 to 304 (MKTVVFAYHD…TLGLVQGSRL (304 aa)) are formyltransferase ArnAFT. 86-88 (HLI) is a binding site for (6R)-10-formyltetrahydrofolate. The active-site Proton donor; for formyltransferase activity is the His-104. Residues Arg-114 and 136–140 (VKRAD) each bind (6R)-10-formyltetrahydrofolate. Positions 314-660 (RRTRVLILGV…RTVDLTDKPL (347 aa)) are dehydrogenase ArnADH. NAD(+) contacts are provided by residues Asp-347 and 368–369 (DI). UDP-alpha-D-glucuronate is bound by residues Ala-393, Tyr-398, and 432 to 433 (TS). Glu-434 serves as the catalytic Proton acceptor; for decarboxylase activity. UDP-alpha-D-glucuronate contacts are provided by residues Arg-460, Asn-492, 526–535 (KLIDGGKQKR), and Tyr-613. Arg-619 (proton donor; for decarboxylase activity) is an active-site residue.

It in the N-terminal section; belongs to the Fmt family. UDP-L-Ara4N formyltransferase subfamily. In the C-terminal section; belongs to the NAD(P)-dependent epimerase/dehydratase family. UDP-glucuronic acid decarboxylase subfamily. In terms of assembly, homohexamer, formed by a dimer of trimers.

The enzyme catalyses UDP-alpha-D-glucuronate + NAD(+) = UDP-beta-L-threo-pentopyranos-4-ulose + CO2 + NADH. It carries out the reaction UDP-4-amino-4-deoxy-beta-L-arabinose + (6R)-10-formyltetrahydrofolate = UDP-4-deoxy-4-formamido-beta-L-arabinose + (6S)-5,6,7,8-tetrahydrofolate + H(+). Its pathway is nucleotide-sugar biosynthesis; UDP-4-deoxy-4-formamido-beta-L-arabinose biosynthesis; UDP-4-deoxy-4-formamido-beta-L-arabinose from UDP-alpha-D-glucuronate: step 1/3. It participates in nucleotide-sugar biosynthesis; UDP-4-deoxy-4-formamido-beta-L-arabinose biosynthesis; UDP-4-deoxy-4-formamido-beta-L-arabinose from UDP-alpha-D-glucuronate: step 3/3. The protein operates within bacterial outer membrane biogenesis; lipopolysaccharide biosynthesis. Bifunctional enzyme that catalyzes the oxidative decarboxylation of UDP-glucuronic acid (UDP-GlcUA) to UDP-4-keto-arabinose (UDP-Ara4O) and the addition of a formyl group to UDP-4-amino-4-deoxy-L-arabinose (UDP-L-Ara4N) to form UDP-L-4-formamido-arabinose (UDP-L-Ara4FN). The modified arabinose is attached to lipid A and is required for resistance to polymyxin and cationic antimicrobial peptides. In Escherichia coli O6:K15:H31 (strain 536 / UPEC), this protein is Bifunctional polymyxin resistance protein ArnA.